We begin with the raw amino-acid sequence, 339 residues long: UDP-galactose transporter homolog 1 (339 aa).

The next 9 helical transmembrane spans lie at 5–25 (ILKHVFAVGGIYCSFLTWGLL), 43–63 (VPYIVALVQATIAMICGLIYI), 91–111 (AISAPLAAYSLSYVDFLTYML), 138–158 (LVVLLVTVGITIFTLDGHKPS), 171–191 (SSLIGFVLLGSSLFLDGLTNA), 208–228 (HLMFALNFFLIVWNVIYMVLV), 246–268 (ISRYLLAYACCGAIGQCFIFYTL), 273–295 (SLVLVMVTVTRKMFSMILSIIVY), and 301–321 (LWQWVGIVIVFTGVVCESMGK).

Belongs to the nucleotide-sugar transporter family. SLC35B subfamily.

Its subcellular location is the endoplasmic reticulum membrane. Functionally, may be involved in specific transport of UDP-Gal from the cytosol to the Golgi lumen. Involved in the maintenance of optimal conditions for the folding of secretory pathway proteins in the endoplasmic reticulum. This Kluyveromyces lactis (strain ATCC 8585 / CBS 2359 / DSM 70799 / NBRC 1267 / NRRL Y-1140 / WM37) (Yeast) protein is UDP-galactose transporter homolog 1 (HUT1).